The sequence spans 227 residues: Claudin-15 (227 aa).

A topological domain (cytoplasmic) is located at residue methionine 1. A helical transmembrane segment spans residues 2 to 24; the sequence is SVAVETFGFFMSALGLLMLGLTL. Over 25–74 the chain is Extracellular; the sequence is SNSYWRVSTVHGNVITTNTIFENLWYSCATDSLGVSNCWDFPSMLALSGY. Cysteine 52 and cysteine 62 are disulfide-bonded. Residues 75-99 form a helical membrane-spanning segment; that stretch reads VQGCRALMITAILLGFLGLFLGMVG. The Cytoplasmic portion of the chain corresponds to 100–115; it reads LRCTNVGNMDLSKKAK. Serine 111 is modified (phosphoserine). A helical transmembrane segment spans residues 116–140; the sequence is LLAIAGTLHILAGACGMVAISWYAV. Residues 141-159 are Extracellular-facing; it reads NITTDFFNPLYAGTKYELG. The important for the formation of tight-junction strand-like structures stretch occupies residues 146–147; sequence FF. A helical membrane pass occupies residues 160–182; that stretch reads PALYLGWSASLLSILGGICVFST. Residues 183 to 227 lie on the Cytoplasmic side of the membrane; the sequence is CCCSSKEEPATRAGLPYKPSTVVIPRATSDESDISFGKYGKNAYV. Phosphoserine is present on residues serine 211, serine 214, and serine 217.

The protein belongs to the claudin family. As to quaternary structure, can form homo- and heteropolymeric tight junction strands. Palmitoylated when heterogeneously expressed in S.frugiperda cells. In terms of tissue distribution, detected in duodenum, jejunum and ileum. Detected on intestinal villi and crypts (at protein level). Ubiquitous. Detected in small and large intestine, colon, jejunum, heart, kidney and lung.

The protein resides in the cell junction. Its subcellular location is the tight junction. It localises to the cell membrane. It carries out the reaction Na(+)(in) = Na(+)(out). It catalyses the reaction K(+)(in) = K(+)(out). The catalysed reaction is Cs(+)(in) = Cs(+)(out). The enzyme catalyses Rb(+)(in) = Rb(+)(out). It carries out the reaction Li(+)(in) = Li(+)(out). It catalyses the reaction NH4(+)(in) = NH4(+)(out). The catalysed reaction is methylamine(out) = methylamine(in). The enzyme catalyses H2O(in) = H2O(out). Its function is as follows. Forms paracellular channels: polymerizes in tight junction strands with cation- and water-selective channels through the strands, conveying epithelial permeability in a process known as paracellular tight junction permeability. In intestinal epithelium, allows for sodium and water fluxes from the peritoneal side to the lumen of the intestine to regulate nutrient absorption and intestinal morphogenesis. The protein is Claudin-15 of Mus musculus (Mouse).